Reading from the N-terminus, the 589-residue chain is Serine/threonine-protein kinase STE7 homolog (589 aa).

Residues Met1–Leu18 show a composition bias toward basic and acidic residues. Disordered stretches follow at residues Met1–Asn162 and Arg185–Ser232. Over residues Pro24 to Pro33 the composition is skewed to low complexity. Polar residues predominate over residues Val57–Met69. The span at Pro92–Ser121 shows a compositional bias: low complexity. Composition is skewed to polar residues over residues Ile127–Ser136 and Ser144–Asn162. A compositionally biased stretch (basic residues) spans Arg185–Gln203. Residues Ile206–Pro220 are compositionally biased toward low complexity. Positions Leu249–Phe565 constitute a Protein kinase domain. ATP contacts are provided by residues Leu255–Val263 and Lys278. Residue Asp374 is the Proton acceptor of the active site. Residue Ser402 is modified to Phosphoserine. Thr408 carries the phosphothreonine modification. Residues Ile473–Tyr499 are disordered.

The protein belongs to the protein kinase superfamily. STE Ser/Thr protein kinase family. MAP kinase kinase subfamily.

It carries out the reaction L-seryl-[protein] + ATP = O-phospho-L-seryl-[protein] + ADP + H(+). The catalysed reaction is L-threonyl-[protein] + ATP = O-phospho-L-threonyl-[protein] + ADP + H(+). The enzyme catalyses L-tyrosyl-[protein] + ATP = O-phospho-L-tyrosyl-[protein] + ADP + H(+). In Candida albicans (strain WO-1) (Yeast), this protein is Serine/threonine-protein kinase STE7 homolog (HST7).